We begin with the raw amino-acid sequence, 81 residues long: Neurotoxin LmNaTx11.1 (81 aa).

Positions 1-18 are cleaved as a signal peptide; the sequence is MKIVIIFFIAMMAVGVYS. Residues 19 to 80 form the LCN-type CS-alpha/beta domain; that stretch reads KDGYLVKKNG…PTYPSSKTCS (62 aa). 4 disulfide bridges follow: cysteine 29–cysteine 79, cysteine 33–cysteine 56, cysteine 42–cysteine 61, and cysteine 46–cysteine 63.

This sequence belongs to the long (4 C-C) scorpion toxin superfamily. Sodium channel inhibitor family. Beta subfamily. Expressed by the venom gland.

The protein localises to the secreted. Binds voltage-independently at site-4 of sodium channels (Nav) and shift the voltage of activation toward more negative potentials thereby affecting sodium channel activation and promoting spontaneous and repetitive firing. This is Neurotoxin LmNaTx11.1 from Lychas mucronatus (Chinese swimming scorpion).